Here is an 862-residue protein sequence, read N- to C-terminus: Valine--tRNA ligase (862 aa).

The short motif at 43 to 53 is the 'HIGH' region element; sequence PNVTGSLHMGH. Zn(2+) contacts are provided by Cys-176, Cys-179, Cys-344, Cys-347, Cys-417, Cys-420, Cys-438, and Cys-441. The 'KMSKS' region signature appears at 528-532; sequence KMSKS. An ATP-binding site is contributed by Lys-531. The stretch at 802 to 862 forms a coiled coil; that stretch reads RRRQEKRLKE…RIREALSQIG (61 aa).

Belongs to the class-I aminoacyl-tRNA synthetase family. ValS type 1 subfamily. In terms of assembly, monomer. Zn(2+) serves as cofactor.

The protein localises to the cytoplasm. It catalyses the reaction tRNA(Val) + L-valine + ATP = L-valyl-tRNA(Val) + AMP + diphosphate. In terms of biological role, catalyzes the attachment of valine to tRNA(Val). As ValRS can inadvertently accommodate and process structurally similar amino acids such as threonine, to avoid such errors, it has a 'posttransfer' editing activity that hydrolyzes mischarged Thr-tRNA(Val) in a tRNA-dependent manner. This chain is Valine--tRNA ligase, found in Thermus thermophilus (strain ATCC BAA-163 / DSM 7039 / HB27).